A 471-amino-acid chain; its full sequence is Putative multidrug resistance protein MdtD (471 aa).

The next 13 membrane-spanning stretches (helical) occupy residues 12 to 32, 49 to 69, 77 to 97, 102 to 124, 138 to 158, 165 to 185, 197 to 217, 222 to 242, 263 to 283, 286 to 306, 342 to 362, 396 to 416, and 431 to 451; these read LWIVAFGFFMQSLDTTIVNTA, MVVVSYVLTVAVMLPASGWLA, IFFTAIVLFTLGSLFCAWSST, VLARVLQGVGGAMMVPVGRLTVM, FVTLPGQVGPLLGPALGGILV, WIFLINIPVGIVGAIATLMLM, LSGFLLLAVGMAVLTMALDGS, LSPLSLGALVLCGILAIALYL, FSLGLSGSFAGRVGSGMLPFM, VFLQIGLGFSPFHAGLMMIPM, LLFMSVAMLGWYYALPFVLFL, MIMQLSMSIGVTIAGLLLGMF, and VFMYTWLCMALIIALPALIFA.

The protein belongs to the major facilitator superfamily. TCR/Tet family.

It is found in the cell inner membrane. This is Putative multidrug resistance protein MdtD from Citrobacter koseri (strain ATCC BAA-895 / CDC 4225-83 / SGSC4696).